The chain runs to 95 residues: Large ribosomal subunit protein bL25 (95 aa).

The protein belongs to the bacterial ribosomal protein bL25 family. As to quaternary structure, part of the 50S ribosomal subunit; part of the 5S rRNA/L5/L18/L25 subcomplex. Contacts the 5S rRNA. Binds to the 5S rRNA independently of L5 and L18.

This is one of the proteins that binds to the 5S RNA in the ribosome where it forms part of the central protuberance. The protein is Large ribosomal subunit protein bL25 of Shewanella amazonensis (strain ATCC BAA-1098 / SB2B).